The chain runs to 359 residues: 3-dehydroquinate synthase (359 aa).

Residues 71–76 (DGEQYK), 105–109 (GVIGD), 129–130 (TT), Lys-142, Lys-151, and 169–172 (CLST) contribute to the NAD(+) site. 3 residues coordinate Zn(2+): Glu-184, His-247, and His-264.

This sequence belongs to the sugar phosphate cyclases superfamily. Dehydroquinate synthase family. Co(2+) is required as a cofactor. It depends on Zn(2+) as a cofactor. NAD(+) serves as cofactor.

It is found in the cytoplasm. The catalysed reaction is 7-phospho-2-dehydro-3-deoxy-D-arabino-heptonate = 3-dehydroquinate + phosphate. It participates in metabolic intermediate biosynthesis; chorismate biosynthesis; chorismate from D-erythrose 4-phosphate and phosphoenolpyruvate: step 2/7. Its function is as follows. Catalyzes the conversion of 3-deoxy-D-arabino-heptulosonate 7-phosphate (DAHP) to dehydroquinate (DHQ). The sequence is that of 3-dehydroquinate synthase from Shewanella pealeana (strain ATCC 700345 / ANG-SQ1).